The primary structure comprises 366 residues: Putative [LysW]-aminoadipate semialdehyde/glutamate semialdehyde transaminase (366 aa).

Pyridoxal 5'-phosphate is bound by residues Gly-90–Thr-91 and Phe-117. Arg-120 is a substrate binding site. Residue Asp-202–Gln-205 coordinates pyridoxal 5'-phosphate. Lys-230 is subject to N6-(pyridoxal phosphate)lysine. Residue Ser-254 coordinates substrate. Thr-255 provides a ligand contact to pyridoxal 5'-phosphate.

This sequence belongs to the class-III pyridoxal-phosphate-dependent aminotransferase family. LysJ subfamily. As to quaternary structure, homodimer. The cofactor is pyridoxal 5'-phosphate.

It is found in the cytoplasm. The enzyme catalyses [amino-group carrier protein]-C-terminal-gamma-(L-lysyl)-L-glutamate + 2-oxoglutarate = [amino-group carrier protein]-C-terminal-N-(1-carboxy-5-oxopentan-1-yl)-L-glutamine + L-glutamate. It carries out the reaction [amino-group carrier protein]-C-terminal-gamma-(L-ornithyl)-L-glutamate + 2-oxoglutarate = [amino-group carrier protein]-C-terminal-gamma-(L-glutamyl-5-semialdehyde)-L-glutamate + L-glutamate. It functions in the pathway amino-acid biosynthesis; L-lysine biosynthesis via AAA pathway; L-lysine from L-alpha-aminoadipate (Thermus route): step 4/5. It participates in amino-acid biosynthesis; L-arginine biosynthesis. Involved in both the arginine and lysine biosynthetic pathways. This is Putative [LysW]-aminoadipate semialdehyde/glutamate semialdehyde transaminase from Pyrococcus furiosus (strain ATCC 43587 / DSM 3638 / JCM 8422 / Vc1).